We begin with the raw amino-acid sequence, 27 residues long: Phospholipase A2 taicatoxin (27 aa).

The protein belongs to the phospholipase A2 family. Group I subfamily. Heterotrimer composed of an alpha-neurotoxin-like peptide of 8 kDa (AC P0CJ35), this neurotoxic phospholipase of 16 kDa and a serine protease inhibitor of 7 kDa (AC B7S4N9) at an approximate stoichiometry of 1:1:4; non-covalently linked. Ca(2+) serves as cofactor. Contains 7 disulfide bonds. As to expression, expressed by the venom gland.

The protein localises to the secreted. The enzyme catalyses a 1,2-diacyl-sn-glycero-3-phosphocholine + H2O = a 1-acyl-sn-glycero-3-phosphocholine + a fatty acid + H(+). Functionally, heterotrimer: blocks the voltage-dependent L-type calcium channels from the heart, and the small conductance calcium-activated potassium channels in the chromaffin cells and in the brain. Is very toxic to mice. In terms of biological role, monomer: Snake venom phospholipase A2 (PLA2) that has neurotoxic activities. Voltage-dependently affects ionic currents in chick (Gallus domesticus) dorsal root ganglion cells. PLA2 catalyzes the calcium-dependent hydrolysis of the 2-acyl groups in 3-sn-phosphoglycerides. In Oxyuranus scutellatus scutellatus (Australian taipan), this protein is Phospholipase A2 taicatoxin.